The chain runs to 297 residues: MMTLPIVKGEYKKDYNLKHLTWFKVGGNAEIFFKPFDSEDLASFLRQNKQKLPITTFGAGSNIIIRDGGIEGVTIKLGQSFSNIDFIDDNHLVVGSSCLNYNLAKFCQANAISGFEFLVGIPGTIGGGAAMNAGAYGSEFKDIIVRIEAIDFAGNFLTFTNEEIGFKYRSNNLPKNLIILKAIFKVNKGDSENILLRMNEINATRSRTQPIKERTGGSTFANPEGGLKSWQLIDKAGLRGYRIGGASVSELHCNFMINNGDATAKDLEDLGNFVRQNVFEDSGVKLNWEIKRIGKYV.

The FAD-binding PCMH-type domain maps to 24-189 (KVGGNAEIFF…LKAIFKVNKG (166 aa)). Arg-169 is an active-site residue. Ser-218 acts as the Proton donor in catalysis. Glu-289 is an active-site residue.

This sequence belongs to the MurB family. Requires FAD as cofactor.

It is found in the cytoplasm. It carries out the reaction UDP-N-acetyl-alpha-D-muramate + NADP(+) = UDP-N-acetyl-3-O-(1-carboxyvinyl)-alpha-D-glucosamine + NADPH + H(+). It functions in the pathway cell wall biogenesis; peptidoglycan biosynthesis. Functionally, cell wall formation. In Rickettsia canadensis (strain McKiel), this protein is UDP-N-acetylenolpyruvoylglucosamine reductase.